The primary structure comprises 306 residues: Pentalenolactone F synthase (306 aa).

Residues histidine 110 and aspartate 112 each coordinate Fe cation. Threonine 138 and tryptophan 258 together coordinate 2-oxoglutarate. Histidine 273 is a Fe cation binding site. Arginine 284 serves as a coordination point for 2-oxoglutarate.

This sequence belongs to the TfdA dioxygenase family. The cofactor is Fe(2+).

It catalyses the reaction pentalenolactone D + 2 2-oxoglutarate + 2 O2 = pentalenolactone F + 2 succinate + 2 CO2 + H2O. Its pathway is antibiotic biosynthesis; neopentalenolactone biosynthesis. With respect to regulation, activated by ascorbate. In terms of biological role, catalyzes the Fe(2+) and alpha-ketoglutarate-dependent oxidation of pentalenolactone D to pentalenolactone F. Also able to catalyze the oxidation of pentalenolactone D to pentalenolactone E. In presence of neopentalenolactone D, mediates production of PL308 and possibly neopentalenolactone E. The sequence is that of Pentalenolactone F synthase (ptlD) from Streptomyces avermitilis (strain ATCC 31267 / DSM 46492 / JCM 5070 / NBRC 14893 / NCIMB 12804 / NRRL 8165 / MA-4680).